Here is a 268-residue protein sequence, read N- to C-terminus: Nickel import ATP-binding protein NikE (268 aa).

In terms of domain architecture, ABC transporter spans 4–252 (LNVSGLSHHY…SSDAGRVLQN (249 aa)). 45-52 (GRSGCGKS) is an ATP binding site.

The protein belongs to the ABC transporter superfamily. Nickel importer (TC 3.A.1.5.3) family. In terms of assembly, the complex is composed of two ATP-binding proteins (NikD and NikE), two transmembrane proteins (NikB and NikC) and a solute-binding protein (NikA).

It localises to the cell inner membrane. The catalysed reaction is Ni(2+)(out) + ATP + H2O = Ni(2+)(in) + ADP + phosphate + H(+). Part of the ABC transporter complex NikABCDE involved in nickel import. Responsible for energy coupling to the transport system. The chain is Nickel import ATP-binding protein NikE from Shigella boydii serotype 4 (strain Sb227).